The sequence spans 55 residues: Transcriptional regulator CdrS (55 aa).

The protein belongs to the CdrS family.

The protein resides in the cytoplasm. Functionally, transcriptional regulator which plays a central role in the regulation of cell division. Activates the expression of the gene encoding the cell division protein FtsZ2, and of other genes encoding proteins predicted to function in critical aspects of cell division. Required for normal cell division but not for cell elongation. May act during the transition from stasis to growth. The CdrSL-FtsZ2 transcriptional network might coordinate cell division timing with cell growth. The chain is Transcriptional regulator CdrS from Halobacterium salinarum (strain ATCC 700922 / JCM 11081 / NRC-1) (Halobacterium halobium).